The following is a 200-amino-acid chain: NAD(P)H dehydrogenase (quinone) (200 aa).

Positions 4 to 191 constitute a Flavodoxin-like domain; that stretch reads VLVLYYSSYG…DIARYQGKHV (188 aa). Residues 10 to 15 and 79 to 81 each bind FMN; these read SSYGHV and TRF. Tyrosine 12 is a binding site for NAD(+). Tryptophan 99 contributes to the substrate binding site. FMN-binding positions include 114 to 120 and histidine 135; that span reads STGTQHG.

Belongs to the WrbA family. The cofactor is FMN.

It catalyses the reaction a quinone + NADH + H(+) = a quinol + NAD(+). The enzyme catalyses a quinone + NADPH + H(+) = a quinol + NADP(+). This is NAD(P)H dehydrogenase (quinone) from Burkholderia vietnamiensis (strain G4 / LMG 22486) (Burkholderia cepacia (strain R1808)).